We begin with the raw amino-acid sequence, 251 residues long: Hydroxyacylglutathione hydrolase (251 aa).

Residues histidine 53, histidine 55, aspartate 57, histidine 58, histidine 110, aspartate 127, and histidine 165 each contribute to the Zn(2+) site.

The protein belongs to the metallo-beta-lactamase superfamily. Glyoxalase II family. Monomer. Zn(2+) serves as cofactor.

The catalysed reaction is an S-(2-hydroxyacyl)glutathione + H2O = a 2-hydroxy carboxylate + glutathione + H(+). It participates in secondary metabolite metabolism; methylglyoxal degradation; (R)-lactate from methylglyoxal: step 2/2. Functionally, thiolesterase that catalyzes the hydrolysis of S-D-lactoyl-glutathione to form glutathione and D-lactic acid. The polypeptide is Hydroxyacylglutathione hydrolase (Blochmanniella pennsylvanica (strain BPEN)).